Here is a 356-residue protein sequence, read N- to C-terminus: Decorin (356 aa).

The first 15 residues, 1-15 (MRLVLFILLLPVCLA), serve as a signal peptide directing secretion. Positions 16 to 29 (TPFHQKGLFDFMLE) are excised as a propeptide. An O-linked (Xyl...) (glycosaminoglycan) serine glycan is attached at Ser-45. Cystine bridges form between Cys-51–Cys-57 and Cys-55–Cys-64. 12 LRR repeats span residues 70–90 (ERVP…NNKI), 91–114 (TEIR…NNKI), 115–138 (SKIS…KNNL), 139–159 (KELP…ENEI), 160–183 (SKLR…TNPL), 184–209 (KSSG…DTNI), 210–230 (TSIP…GNKI), 231–254 (SKID…FNSI), 255–278 (SSVE…NNEL), 279–301 (VRVP…NNKI), 302–331 (ASIG…SNPV), and 332–356 (QYWE…GNYK). Asn-208 is a glycosylation site (N-linked (GlcNAc...) asparagine). A glycan (N-linked (GlcNAc...) asparagine) is linked at Asn-259. Cys-310 and Cys-343 are oxidised to a cystine.

It belongs to the small leucine-rich proteoglycan (SLRP) family. SLRP class I subfamily. Binds to type I and type II collagen, to fibronectin and TGF-beta. Forms a ternary complex with MFAP2 and ELN. The attached glycosaminoglycan chain can be either chondroitin sulfate or dermatan sulfate depending upon the tissue of origin.

The protein localises to the secreted. The protein resides in the extracellular space. It localises to the extracellular matrix. In terms of biological role, may affect the rate of fibrils formation. In Coturnix japonica (Japanese quail), this protein is Decorin (DCN).